The primary structure comprises 951 residues: Leucine-rich repeat-containing G-protein coupled receptor 4 (951 aa).

Residues 1–24 form the signal peptide; sequence MPGPLRLLCFFALGLLGSAGPSGA. The 33-residue stretch at 25–57 folds into the LRRNT domain; sequence APPLCAAPCSCDGDRRVDCSGKGLTAVPEGLSA. Residues 25 to 544 lie on the Extracellular side of the membrane; that stretch reads APPLCAAPCS…LLGSWMIRLT (520 aa). 2 cysteine pairs are disulfide-bonded: C29–C35 and C33–C43. LRR repeat units follow at residues 58–79, 82–103, 106–127, 130–151, 154–177, 178–199, 202–223, 226–247, 249–270, 273–294, 320–341, 344–365, 366–387, 390–411, and 414–435; these read FTQA…AFKN, FLEE…ALSG, ELKV…AIRG, ALQS…SFEG, QLRH…SNLP, TLQA…AFTN, SLVV…CFDG, NLET…IKAL, SLKE…AFAG, LLRT…AFHN, HLES…LCQN, MLRT…NGCR, ALEE…TFQG, SLRI…AFAK, and TITN…GLNG. A glycan (N-linked (GlcNAc...) asparagine) is linked at N68. Residues N188 and N199 are each glycosylated (N-linked (GlcNAc...) asparagine). N294 is a glycosylation site (N-linked (GlcNAc...) asparagine). C339 and C364 are disulfide-bonded. 2 disulfides stabilise this stretch: C470-C522 and C471-C476. Positions 487–512 are disordered; the sequence is NSPQDHSVTKEKGATDAANATSTAES. The span at 501 to 510 shows a compositional bias: low complexity; that stretch reads TDAANATSTA. N-linked (GlcNAc...) asparagine glycosylation occurs at N505. A helical transmembrane segment spans residues 545–565; it reads VWFIFLVALLFNLLVILTVFA. At 566 to 575 the chain is on the cytoplasmic side; sequence SCSSLPASKL. A helical membrane pass occupies residues 576 to 596; sequence FIGLISVSNLLMGIYTGILTF. Over 597–619 the chain is Extracellular; that stretch reads LDAVSWGRFAEFGIWWETGSGCK. C618 and C693 are oxidised to a cystine. The helical transmembrane segment at 620–640 threads the bilayer; sequence VAGSLAVFSSESAVFLLTLAA. Over 641–661 the chain is Cytoplasmic; that stretch reads VERSVFAKDVMKNGKSSHLRQ. A helical transmembrane segment spans residues 662 to 682; it reads FQVAALVALLGAAIAGCFPLF. Residues 683–703 are Extracellular-facing; it reads HGGQYSASPLCLPFPTGETPS. The chain crosses the membrane as a helical span at residues 704–724; that stretch reads LGFTVTLVLLNSLAFLLMAII. The Cytoplasmic segment spans residues 725-756; it reads YTKLYCNLEKEDPSENSQSSMIKHVAWLIFTN. A helical membrane pass occupies residues 757-777; sequence CIFFCPVAFFSFAPLITAISI. The Extracellular segment spans residues 778-783; it reads SPEIMK. The helical transmembrane segment at 784 to 804 threads the bilayer; it reads SVTLIFFPLPACLNPVLYVFF. The Cytoplasmic segment spans residues 805–951; the sequence is NPKFKDDWKL…YAYNLPRVRD (147 aa). S920 is modified (phosphoserine).

It belongs to the G-protein coupled receptor 1 family.

It localises to the cell membrane. Functionally, receptor for R-spondins that potentiates the canonical Wnt signaling pathway and is involved in the formation of various organs. Upon binding to R-spondins (RSPO1, RSPO2, RSPO3 or RSPO4), associates with phosphorylated LRP6 and frizzled receptors that are activated by extracellular Wnt receptors, triggering the canonical Wnt signaling pathway to increase expression of target genes. In contrast to classical G-protein coupled receptors, does not activate heterotrimeric G-proteins to transduce the signal. Its function as activator of the Wnt signaling pathway is required for the development of various organs, including liver, kidney, intestine, bone, reproductive tract and eye. May also act as a receptor for norrin (NDP), such results however require additional confirmation in vivo. Required during spermatogenesis to activate the Wnt signaling pathway in peritubular myoid cells. Required for the maintenance of intestinal stem cells and Paneth cell differentiation in postnatal intestinal crypts. Acts as a regulator of bone formation and remodeling. Involved in kidney development; required for maintaining the ureteric bud in an undifferentiated state. Involved in the development of the anterior segment of the eye. Required during erythropoiesis. Also acts as a negative regulator of innate immunity by inhibiting TLR2/TLR4 associated pattern-recognition and pro-inflammatory cytokine production. Plays an important role in regulating the circadian rhythms of plasma lipids, partially through regulating the rhythmic expression of MTTP. Required for proper development of GnRH neurons (gonadotropin-releasing hormone expressing neurons) that control the release of reproductive hormones from the pituitary gland. The sequence is that of Leucine-rich repeat-containing G-protein coupled receptor 4 (Lgr4) from Mus musculus (Mouse).